The following is a 195-amino-acid chain: Glutamyl-tRNA(Gln) amidotransferase subunit C, mitochondrial (195 aa).

A mitochondrion-targeting transit peptide spans 1–18 (MNLSTIGFQVIFKQRLRC).

Belongs to the GatC family. Subunit of the heterotrimeric GatCAB amidotransferase (AdT) complex, composed of A, B and C subunits.

The protein localises to the mitochondrion. The enzyme catalyses L-glutamyl-tRNA(Gln) + L-glutamine + ATP + H2O = L-glutaminyl-tRNA(Gln) + L-glutamate + ADP + phosphate + H(+). Functionally, allows the formation of correctly charged Gln-tRNA(Gln) through the transamidation of misacylated Glu-tRNA(Gln) in the mitochondria. The reaction takes place in the presence of glutamine and ATP through an activated gamma-phospho-Glu-tRNA(Gln). The protein is Glutamyl-tRNA(Gln) amidotransferase subunit C, mitochondrial of Brugia malayi (Filarial nematode worm).